Consider the following 62-residue polypeptide: Conotoxin Pn-B0151 (62 aa).

Residues M1–A22 form the signal peptide. Residues L23–N48 constitute a propeptide that is removed on maturation.

This sequence belongs to the conotoxin T superfamily. In terms of processing, contains 2 disulfide bonds that can be either 'C1-C3, C2-C4' or 'C1-C4, C2-C3', since these disulfide connectivities have been observed for conotoxins with cysteine framework V (for examples, see AC P0DQQ7 and AC P81755). Expressed by the venom duct.

It localises to the secreted. In Conus pennaceus (Feathered cone), this protein is Conotoxin Pn-B0151.